Consider the following 596-residue polypeptide: Protein kinase C iota type (596 aa).

The segment covering 1–12 (MPTQRDSSTMSH) has biased composition (polar residues). The interval 1–23 (MPTQRDSSTMSHTVAGGGSGDHS) is disordered. Residue proline 2 is modified to N-acetylproline. Positions 2–28 (PTQRDSSTMSHTVAGGGSGDHSHQVRV) are required for interaction with RAB2. The tract at residues 2-253 (PTQRDSSTMS…KASSSLGLQD (252 aa)) is regulatory domain. Threonine 3 carries the post-translational modification Phosphothreonine. Phosphoserine occurs at positions 7 and 8. Residue threonine 9 is modified to Phosphothreonine. In terms of domain architecture, PB1 spans 25 to 108 (QVRVKAYYRG…SELLIHVFPC (84 aa)). Residues 72-91 (DEEGDPCTVSSQLELEEAFR) are interaction with PARD6A. The short motif at 125 to 134 (YRRGARRWRK) is the Pseudosubstrate element. The Phorbol-ester/DAG-type zinc-finger motif lies at 140 to 190 (GHTFQAKRFNRRAHCAICTDRIWGLGRQGYKCINCKLLVHKKCHKLVTIEC). The tract at residues 221-246 (PSSHESLDQVGEEKEAMNTRESGKAS) is disordered. A compositionally biased stretch (basic and acidic residues) spans 225–243 (ESLDQVGEEKEAMNTRESG). The region spanning 254 to 522 (FDLLRVIGRG…FADIQGHPFF (269 aa)) is the Protein kinase domain. 260-268 (IGRGSYAKV) lines the ATP pocket. Phosphotyrosine; by SRC occurs at positions 265 and 280. An ATP-binding site is contributed by lysine 283. Tyrosine 334 bears the Phosphotyrosine; by SRC mark. The Proton acceptor role is filled by aspartate 378. Threonine 412 bears the Phosphothreonine; by PDPK1 mark. Positions 523 to 594 (RNVDWDMMEQ…INPLLMSAEE (72 aa)) constitute an AGC-kinase C-terminal domain. Residue threonine 564 is modified to Phosphothreonine.

Belongs to the protein kinase superfamily. AGC Ser/Thr protein kinase family. PKC subfamily. Forms a complex with SQSTM1 and MP2K5. Interacts directly with SQSTM1. Interacts with IKBKB. Interacts with PARD6A, PARD6B and PARD6G. Part of a quaternary complex containing aPKC, PARD3, a PARD6 protein (PARD6A, PARD6B or PARD6G) and a GTPase protein (CDC42 or RAC1). Part of a complex with LLGL1 and PARD6B. Interacts with ADAP1/CENTA1. Interaction with SMG1, through the ZN-finger domain, activates the kinase activity. Interacts with CDK7. Forms a complex with RAB2A and GAPDH involved in recruitment onto the membrane of vesicular tubular clusters (VTCs). Interacts with ECT2 ('Thr-359' phosphorylated form). Interacts with VAMP2. Interacts with WDFY2 (via WD repeats 1-3). Post-translationally, phosphorylation at Thr-412 in the activation loop is not mandatory for activation. Upon neuronal growth factor (NGF) stimulation, phosphorylated by SRC at Tyr-265, Tyr-280 and Tyr-334. Phosphorylation at Tyr-265 facilitates binding to KPNB1/importin-beta regulating entry of PRKCI into the nucleus. Phosphorylation on Tyr-334 is important for NF-kappa-B stimulation. Phosphorylated at Thr-564 during the initial phase of long term potentiation.

It localises to the cytoplasm. The protein localises to the membrane. It is found in the endosome. The protein resides in the nucleus. It carries out the reaction L-seryl-[protein] + ATP = O-phospho-L-seryl-[protein] + ADP + H(+). The enzyme catalyses L-threonyl-[protein] + ATP = O-phospho-L-threonyl-[protein] + ADP + H(+). Atypical PKCs (PRKCI and PRKCZ) exhibit an elevated basal enzymatic activity (that may be due to the interaction with SMG1 or SQSTM1) and are not regulated by diacylglycerol, phosphatidylserine, phorbol esters or calcium ions. Two specific sites, Thr-412 (activation loop of the kinase domain) and Thr-564 (turn motif), need to be phosphorylated for its full activation. Might also be a target for novel lipid activators that are elevated during nutrient-stimulated insulin secretion. Its function is as follows. Calcium- and diacylglycerol-independent serine/ threonine-protein kinase that plays a general protective role against apoptotic stimuli, is involved in NF-kappa-B activation, cell survival, differentiation and polarity, and contributes to the regulation of microtubule dynamics in the early secretory pathway. Is necessary for BCR-ABL oncogene-mediated resistance to apoptotic drug in leukemia cells, protecting leukemia cells against drug-induced apoptosis. In cultured neurons, prevents amyloid beta protein-induced apoptosis by interrupting cell death process at a very early step. In glioblastoma cells, may function downstream of phosphatidylinositol 3-kinase (PI(3)K) and PDPK1 in the promotion of cell survival by phosphorylating and inhibiting the pro-apoptotic factor BAD. Can form a protein complex in non-small cell lung cancer (NSCLC) cells with PARD6A and ECT2 and regulate ECT2 oncogenic activity by phosphorylation, which in turn promotes transformed growth and invasion. In response to nerve growth factor (NGF), acts downstream of SRC to phosphorylate and activate IRAK1, allowing the subsequent activation of NF-kappa-B and neuronal cell survival. Functions in the organization of the apical domain in epithelial cells by phosphorylating EZR. This step is crucial for activation and normal distribution of EZR at the early stages of intestinal epithelial cell differentiation. Forms a protein complex with LLGL1 and PARD6B independently of PARD3 to regulate epithelial cell polarity. Plays a role in microtubule dynamics in the early secretory pathway through interaction with RAB2A and GAPDH and recruitment to vesicular tubular clusters (VTCs). In human coronary artery endothelial cells (HCAEC), is activated by saturated fatty acids and mediates lipid-induced apoptosis. Involved in early synaptic long term potentiation phase in CA1 hippocampal cells and short term memory formation. This chain is Protein kinase C iota type (PRKCI), found in Pongo abelii (Sumatran orangutan).